Consider the following 349-residue polypeptide: ATPase GET3 (349 aa).

Residue 26–33 (KGGVGKTT) coordinates ATP. Asp57 is a catalytic residue. The ATP site is built by Glu242 and Asn269. Zn(2+)-binding residues include Cys281 and Cys284.

Belongs to the arsA ATPase family. In terms of assembly, homodimer. Component of the Golgi to ER traffic (GET) complex, which is composed of GET1, GET2 and GET3. Within the complex, GET1 and GET2 form a heterotetramer which is stabilized by phosphatidylinositol binding and which binds to the GET3 homodimer. Interacts with the chloride channel protein GEF1.

It is found in the cytoplasm. It localises to the endoplasmic reticulum. The protein resides in the golgi apparatus. Functionally, ATPase required for the post-translational delivery of tail-anchored (TA) proteins to the endoplasmic reticulum. Recognizes and selectively binds the transmembrane domain of TA proteins in the cytosol. This complex then targets to the endoplasmic reticulum by membrane-bound receptors GET1 and GET2, where the tail-anchored protein is released for insertion. This process is regulated by ATP binding and hydrolysis. ATP binding drives the homodimer towards the closed dimer state, facilitating recognition of newly synthesized TA membrane proteins. ATP hydrolysis is required for insertion. Subsequently, the homodimer reverts towards the open dimer state, lowering its affinity for the GET1-GET2 receptor, and returning it to the cytosol to initiate a new round of targeting. Cooperates with the HDEL receptor ERD2 to mediate the ATP-dependent retrieval of resident ER proteins that contain a C-terminal H-D-E-L retention signal from the Golgi to the ER. Involved in low-level resistance to the oxyanions arsenite and arsenate, and in heat tolerance. This is ATPase GET3 from Candida tropicalis (strain ATCC MYA-3404 / T1) (Yeast).